Reading from the N-terminus, the 200-residue chain is Holliday junction branch migration complex subunit RuvA (200 aa).

Residues 1 to 64 (MFAYFKGSLV…EDALQLYGFF (64 aa)) form a domain I region. A domain II region spans residues 65–143 (KEEERQLFRL…KLPLVTPAAG (79 aa)). A flexible linker region spans residues 143 to 147 (GKAAM). Positions 148–200 (PSHHVKDDAVHALVTLGFSRLLAQKAVSALLEEKPEQSVEEVIKYALATIHNS) are domain III.

The protein belongs to the RuvA family. As to quaternary structure, homotetramer. Forms an RuvA(8)-RuvB(12)-Holliday junction (HJ) complex. HJ DNA is sandwiched between 2 RuvA tetramers; dsDNA enters through RuvA and exits via RuvB. An RuvB hexamer assembles on each DNA strand where it exits the tetramer. Each RuvB hexamer is contacted by two RuvA subunits (via domain III) on 2 adjacent RuvB subunits; this complex drives branch migration. In the full resolvosome a probable DNA-RuvA(4)-RuvB(12)-RuvC(2) complex forms which resolves the HJ.

The protein resides in the cytoplasm. In terms of biological role, the RuvA-RuvB-RuvC complex processes Holliday junction (HJ) DNA during genetic recombination and DNA repair, while the RuvA-RuvB complex plays an important role in the rescue of blocked DNA replication forks via replication fork reversal (RFR). RuvA specifically binds to HJ cruciform DNA, conferring on it an open structure. The RuvB hexamer acts as an ATP-dependent pump, pulling dsDNA into and through the RuvAB complex. HJ branch migration allows RuvC to scan DNA until it finds its consensus sequence, where it cleaves and resolves the cruciform DNA. The protein is Holliday junction branch migration complex subunit RuvA of Chlorobium phaeobacteroides (strain DSM 266 / SMG 266 / 2430).